Reading from the N-terminus, the 37-residue chain is Large ribosomal subunit protein bL36 (37 aa).

Belongs to the bacterial ribosomal protein bL36 family.

The chain is Large ribosomal subunit protein bL36 from Koribacter versatilis (strain Ellin345).